Consider the following 238-residue polypeptide: tRNA (guanine-N(7)-)-methyltransferase (238 aa).

Residues Glu68, Glu93, Asp120, and Asp143 each coordinate S-adenosyl-L-methionine. Residue Asp143 is part of the active site. Substrate-binding positions include Lys147, Asp179, and 216–219; that span reads TKFE.

This sequence belongs to the class I-like SAM-binding methyltransferase superfamily. TrmB family.

It carries out the reaction guanosine(46) in tRNA + S-adenosyl-L-methionine = N(7)-methylguanosine(46) in tRNA + S-adenosyl-L-homocysteine. It participates in tRNA modification; N(7)-methylguanine-tRNA biosynthesis. Its function is as follows. Catalyzes the formation of N(7)-methylguanine at position 46 (m7G46) in tRNA. This chain is tRNA (guanine-N(7)-)-methyltransferase, found in Aliivibrio salmonicida (strain LFI1238) (Vibrio salmonicida (strain LFI1238)).